Reading from the N-terminus, the 71-residue chain is Small ribosomal subunit protein bS21 (71 aa).

This sequence belongs to the bacterial ribosomal protein bS21 family.

This Marinobacter nauticus (strain ATCC 700491 / DSM 11845 / VT8) (Marinobacter aquaeolei) protein is Small ribosomal subunit protein bS21.